The sequence spans 908 residues: 26S proteasome non-ATPase regulatory subunit 2 (908 aa).

At Met-1 the chain carries N-acetylmethionine. The interval 1-51 (MEEGGRDKTPVQSQQPSATAPSGADEKSSGKERRDAGEKDKEQELSEEDKQ) is disordered. Phosphothreonine is present on Thr-9. Residues 10 to 20 (PVQSQQPSATA) show a composition bias toward polar residues. The segment covering 24–51 (ADEKSSGKERRDAGEKDKEQELSEEDKQ) has biased composition (basic and acidic residues). A phosphoserine mark is found at Ser-29 and Ser-147. Tyr-194 carries the phosphotyrosine modification. Phosphoserine occurs at positions 361 and 363. 5 PC repeats span residues 409-442 (SAAASLGMILLWDVDGGLTQIDKYLYSSEDYIKS), 443-479 (GALLACGIVNSGVRNECDPALALLSDYVLHNSNTMRL), 480-514 (GSIFGLGLAYAGSNREDVLTLLLPVMGDSKSSMEV), 517-551 (VTALACGMIAVGSCNGDVTSTILQTIMEKSETELK), and 560-589 (LGLGLNHLGKGEAIEAILAALEVVSEPFRS). At Lys-551 the chain carries N6-acetyllysine. Over residues 623–643 (KEKEEDKDKKEKKDKDKKEAP) the composition is skewed to basic and acidic residues. The segment at 623 to 645 (KEKEEDKDKKEKKDKDKKEAPAD) is disordered. 2 PC repeats span residues 692 to 723 (LALALISVSNPRLNILDTLSKFSHDADPEVSY) and 742 to 757 (AAMLRQLAQYHAKDPN). Residues 708–903 (DTLSKFSHDA…LEGFVILRKN (196 aa)) are required for interaction with UBLCP1.

The protein belongs to the proteasome subunit S2 family. In terms of assembly, component of the 19S proteasome regulatory particle complex. The 26S proteasome consists of a 20S core particle (CP) and two 19S regulatory subunits (RP). The regulatory particle is made of a lid composed of 9 subunits, a base containing 6 ATPases and few additional components including PSMD2. Interacts with RPGRIP1L. Interacts with CRY1 in a KDM8-dependent manner. Interacts (via C-terminus) with phosphatase UBLCP1 (via ubiquitin-like domain); the interaction recruits UBLCP1 to the 19S regulatory particle where it dephosphorylates 19S subunit PSMC2/RPT1 which impairs PSMC2 ATPase activity and disrupts 26S proteasome assembly.

Component of the 26S proteasome, a multiprotein complex involved in the ATP-dependent degradation of ubiquitinated proteins. This complex plays a key role in the maintenance of protein homeostasis by removing misfolded or damaged proteins, which could impair cellular functions, and by removing proteins whose functions are no longer required. Therefore, the proteasome participates in numerous cellular processes, including cell cycle progression, apoptosis, or DNA damage repair. Its function is as follows. Binds to the intracellular domain of tumor necrosis factor type 1 receptor. The binding domain of TRAP1 and TRAP2 resides outside the death domain of TNFR1. This chain is 26S proteasome non-ATPase regulatory subunit 2 (Psmd2), found in Rattus norvegicus (Rat).